Reading from the N-terminus, the 215-residue chain is Protein Syd (215 aa).

Belongs to the Syd family.

Its subcellular location is the cell inner membrane. Its function is as follows. Interacts with the SecY protein in vivo. May bind preferentially to an uncomplexed state of SecY, thus functioning either as a chelating agent for excess SecY in the cell or as a regulatory factor that negatively controls the translocase function. The protein is Protein Syd of Shewanella piezotolerans (strain WP3 / JCM 13877).